Reading from the N-terminus, the 308-residue chain is Acetaldehyde dehydrogenase 1 (308 aa).

10-13 (SGNI) serves as a coordination point for NAD(+). Catalysis depends on cysteine 128, which acts as the Acyl-thioester intermediate. Residues 159–167 (SAGPGTRAN) and asparagine 285 each bind NAD(+).

It belongs to the acetaldehyde dehydrogenase family.

The enzyme catalyses acetaldehyde + NAD(+) + CoA = acetyl-CoA + NADH + H(+). The chain is Acetaldehyde dehydrogenase 1 from Salinispora arenicola (strain CNS-205).